The following is a 257-amino-acid chain: Ditrans,polycis-undecaprenyl-diphosphate synthase ((2E,6E)-farnesyl-diphosphate specific) (257 aa).

Asp24 is an active-site residue. Residue Asp24 coordinates Mg(2+). Substrate contacts are provided by residues 25 to 28 (GNGR), Trp29, Arg37, His41, and 69 to 71 (SSE). Catalysis depends on Asn72, which acts as the Proton acceptor. Substrate is bound by residues Trp73, Arg75, Arg192, and 198 to 200 (RIS). Glu211 is a Mg(2+) binding site.

This sequence belongs to the UPP synthase family. As to quaternary structure, homodimer. The cofactor is Mg(2+).

The enzyme catalyses 8 isopentenyl diphosphate + (2E,6E)-farnesyl diphosphate = di-trans,octa-cis-undecaprenyl diphosphate + 8 diphosphate. In terms of biological role, catalyzes the sequential condensation of isopentenyl diphosphate (IPP) with (2E,6E)-farnesyl diphosphate (E,E-FPP) to yield (2Z,6Z,10Z,14Z,18Z,22Z,26Z,30Z,34E,38E)-undecaprenyl diphosphate (di-trans,octa-cis-UPP). UPP is the precursor of glycosyl carrier lipid in the biosynthesis of bacterial cell wall polysaccharide components such as peptidoglycan and lipopolysaccharide. This Aliivibrio fischeri (strain ATCC 700601 / ES114) (Vibrio fischeri) protein is Ditrans,polycis-undecaprenyl-diphosphate synthase ((2E,6E)-farnesyl-diphosphate specific).